Reading from the N-terminus, the 569-residue chain is Peroxisomal targeting signal receptor (569 aa).

Cys5 is covalently cross-linked (Glycyl cysteine thioester (Cys-Gly) (interchain with G-Cter in ubiquitin)). Residues 6-28 are amphipathic helix 1 (AH1); the sequence is SVGANPLAQLNKRVQQDRTLQHG. A Glycyl lysine isopeptide (Lys-Gly) (interchain with G-Cter in ubiquitin) cross-link involves residue Lys17. The tract at residues 53–71 is amphipathic helix 2 (AH2); it reads KFQMEQFMAGKASSGGNMF. A WxxxF/Y motif 1 motif is present at residues 112-116; that stretch reads WSQEF. Residues 150–154 form an amphipathic helix 3 (AH3) region; sequence PMNMM. The WxxxF/Y motif 2 motif lies at 181 to 185; the sequence is WEQQF. Positions 229–245 are amphipathic helix 4 (AH4); sequence FQQIWNDIHDQTDDLDS. 5 TPR repeats span residues 281–315, 316–349, 417–450, 452–484, and 486–518; these read NTDA…DPGH, VDAW…DPHN, PDVQ…RPDD, CMWN…KPTF, and RARY…HEVE.

The protein belongs to the peroxisomal targeting signal receptor family. In terms of assembly, interacts (via WxxxF/Y and LVxEF motifs) with PEX14; promoting translocation through the PEX13-PEX14 docking complex. In terms of processing, monoubiquitinated at Cys-5 by PEX2 during PEX5 passage through the retrotranslocation channel: monoubiquitination acts as a signal for PEX5 extraction and is required for proper export from peroxisomes and recycling. When PEX5 recycling is compromised, polyubiquitinated at Lys-17 by PEX10 during its passage through the retrotranslocation channel, leading to its degradation.

It is found in the cytoplasm. The protein resides in the cytosol. It localises to the peroxisome matrix. In terms of biological role, receptor that mediates peroxisomal import of proteins containing a C-terminal PTS1-type tripeptide peroxisomal targeting signal (SKL-type). Binds to cargo proteins containing a PTS1 peroxisomal targeting signal in the cytosol, and translocates them into the peroxisome matrix by passing through the PEX13-PEX14 docking complex along with cargo proteins. PEX5 receptor is then retrotranslocated into the cytosol, leading to release of bound cargo in the peroxisome matrix, and reset for a subsequent peroxisome import cycle. The protein is Peroxisomal targeting signal receptor (PEX5) of Eremothecium gossypii (strain ATCC 10895 / CBS 109.51 / FGSC 9923 / NRRL Y-1056) (Yeast).